A 424-amino-acid polypeptide reads, in one-letter code: GTPase Obg (424 aa).

An Obg domain is found at 1-158 (MFIDTAKILV…RMINLEIKLL (158 aa)). The OBG-type G domain maps to 159 to 331 (ADVGLIGFPN…LIKEVTRQLS (173 aa)). GTP is bound by residues 165–172 (GFPNVGKS), 190–194 (FTTLK), 212–215 (DIPG), 282–285 (NKID), and 312–314 (SAA). The Mg(2+) site is built by Ser-172 and Thr-192. The region spanning 345-424 (RFMPEEKRFT…LNDFEFDFLL (80 aa)) is the OCT domain.

This sequence belongs to the TRAFAC class OBG-HflX-like GTPase superfamily. OBG GTPase family. As to quaternary structure, monomer. Requires Mg(2+) as cofactor.

It localises to the cytoplasm. Its function is as follows. An essential GTPase which binds GTP, GDP and possibly (p)ppGpp with moderate affinity, with high nucleotide exchange rates and a fairly low GTP hydrolysis rate. Plays a role in control of the cell cycle, stress response, ribosome biogenesis and in those bacteria that undergo differentiation, in morphogenesis control. The sequence is that of GTPase Obg from Clostridium novyi (strain NT).